Consider the following 322-residue polypeptide: Protease HtpX homolog (322 aa).

Helical transmembrane passes span 19-39 (ILLI…CYLL) and 61-81 (FINL…IAYF). A Zn(2+)-binding site is contributed by histidine 165. Residue glutamate 166 is part of the active site. Position 169 (histidine 169) interacts with Zn(2+). 2 helical membrane-spanning segments follow: residues 175–195 (VRLL…AQIA) and 216–236 (ILIL…ATLM). Glutamate 245 contacts Zn(2+).

The protein belongs to the peptidase M48B family. Requires Zn(2+) as cofactor.

Its subcellular location is the cell inner membrane. In Bacteroides fragilis (strain ATCC 25285 / DSM 2151 / CCUG 4856 / JCM 11019 / LMG 10263 / NCTC 9343 / Onslow / VPI 2553 / EN-2), this protein is Protease HtpX homolog.